A 305-amino-acid chain; its full sequence is Homeobox protein ceh-23 (305 aa).

2 disordered regions span residues 113 to 140 (ASCP…ERRR) and 262 to 305 (RRSK…KVLN). Residues 120-135 (ASSQATVTLQVPSTGS) are compositionally biased toward polar residues. The segment at residues 211 to 270 (HRKARTIYGTTQTQQLEDMFKGQMYVVGAERENLAQRLGLSPSQVRIWFQNRRSKHRRKQ) is a DNA-binding region (homeobox). A compositionally biased stretch (acidic residues) spans 287-305 (GKDEEEDDEEDEDDVKVLN).

Belongs to the distal-less homeobox family.

The protein resides in the nucleus. Functionally, probable transcription factor. Required for differentiation of AIY interneurons, acting downstream of LIM/homeobox protein ttx-3. Modulates gene expression, acting downstream of AMP kinase aak-2/AMPK signaling. Modulates lifespan. This is Homeobox protein ceh-23 (ceh-23) from Caenorhabditis elegans.